We begin with the raw amino-acid sequence, 668 residues long: Nuclear pore complex protein Nup75 (668 aa).

It belongs to the nucleoporin Nup85 family. Component of the nuclear pore complex (NPC). Component of the NPC Nup107-160 subcomplex.

The protein resides in the nucleus. The protein localises to the nuclear pore complex. It localises to the nucleus membrane. Functionally, component of the nuclear pore complex (NPC) that seems to be required for NPC assembly and maintenance. Required for nuclear import of phosphorylated Mad via importin msk. Has no role in classical nuclear localization signal (cNLS)-dependent nuclear import via importin-beta. Facilitates the interaction between Nup93 and sec13 with msk. This Drosophila melanogaster (Fruit fly) protein is Nuclear pore complex protein Nup75.